A 148-amino-acid polypeptide reads, in one-letter code: MPITLLGPRLADPGTEFVYHGPADDCEGCPYRQQCLNLTEGVRYEVTDVREGGQVLDCAVHDEGAVAVDVEPTTIPATVPSKGAYAGSKGKLAGPCPHTECPSHEFCEPAGASFDTEYQIAEIDGEPPHDHCALDRDLTLVEFAPAER.

This sequence belongs to the UPF0179 family.

This is UPF0179 protein VNG_1401C from Halobacterium salinarum (strain ATCC 700922 / JCM 11081 / NRC-1) (Halobacterium halobium).